A 353-amino-acid polypeptide reads, in one-letter code: Photosystem II protein D1 (353 aa).

Threonine 2 bears the N-acetylthreonine mark. Threonine 2 is modified (phosphothreonine). A run of 3 helical transmembrane segments spans residues 29-46 (YIGWFGVLMIPTLLTATS), 118-133 (HFLLGVACYMGREWEL), and 142-156 (WIAVAYSAPVAAATA). Residue histidine 118 coordinates chlorophyll a. Tyrosine 126 serves as a coordination point for pheophytin a. [CaMn4O5] cluster-binding residues include aspartate 170 and glutamate 189. Residues 197–218 (FHMLGVAGVFGGSLFSAMHGSL) traverse the membrane as a helical segment. Histidine 198 contacts chlorophyll a. A quinone is bound by residues histidine 215 and 264–265 (SF). Histidine 215 lines the Fe cation pocket. Residue histidine 272 participates in Fe cation binding. A helical membrane pass occupies residues 274 to 288 (FLAAWPVVGIWFTAL). Positions 332, 333, 342, and 344 each coordinate [CaMn4O5] cluster. Residues 345–353 (AVEVPSING) constitute a propeptide that is removed on maturation.

This sequence belongs to the reaction center PufL/M/PsbA/D family. PSII is composed of 1 copy each of membrane proteins PsbA, PsbB, PsbC, PsbD, PsbE, PsbF, PsbH, PsbI, PsbJ, PsbK, PsbL, PsbM, PsbT, PsbX, PsbY, PsbZ, Psb30/Ycf12, at least 3 peripheral proteins of the oxygen-evolving complex and a large number of cofactors. It forms dimeric complexes. It depends on The D1/D2 heterodimer binds P680, chlorophylls that are the primary electron donor of PSII, and subsequent electron acceptors. It shares a non-heme iron and each subunit binds pheophytin, quinone, additional chlorophylls, carotenoids and lipids. D1 provides most of the ligands for the Mn4-Ca-O5 cluster of the oxygen-evolving complex (OEC). There is also a Cl(-1) ion associated with D1 and D2, which is required for oxygen evolution. The PSII complex binds additional chlorophylls, carotenoids and specific lipids. as a cofactor. Tyr-161 forms a radical intermediate that is referred to as redox-active TyrZ, YZ or Y-Z. Post-translationally, C-terminally processed by CTPA; processing is essential to allow assembly of the oxygen-evolving complex and thus photosynthetic growth.

It localises to the plastid. The protein localises to the chloroplast thylakoid membrane. The catalysed reaction is 2 a plastoquinone + 4 hnu + 2 H2O = 2 a plastoquinol + O2. Photosystem II (PSII) is a light-driven water:plastoquinone oxidoreductase that uses light energy to abstract electrons from H(2)O, generating O(2) and a proton gradient subsequently used for ATP formation. It consists of a core antenna complex that captures photons, and an electron transfer chain that converts photonic excitation into a charge separation. The D1/D2 (PsbA/PsbD) reaction center heterodimer binds P680, the primary electron donor of PSII as well as several subsequent electron acceptors. This Cucumis sativus (Cucumber) protein is Photosystem II protein D1.